Consider the following 968-residue polypeptide: Protein translocase subunit SecA (968 aa).

Residues Q99, 117–121 (GEGKT), and D631 contribute to the ATP site.

This sequence belongs to the SecA family. As to quaternary structure, monomer and homodimer. Part of the essential Sec protein translocation apparatus which comprises SecA, SecYEG and auxiliary proteins SecDF. Other proteins may also be involved.

Its subcellular location is the cell inner membrane. The protein resides in the cytoplasm. It catalyses the reaction ATP + H2O + cellular proteinSide 1 = ADP + phosphate + cellular proteinSide 2.. Functionally, part of the Sec protein translocase complex. Interacts with the SecYEG preprotein conducting channel. Has a central role in coupling the hydrolysis of ATP to the transfer of proteins into and across the cell membrane, serving as an ATP-driven molecular motor driving the stepwise translocation of polypeptide chains across the membrane. The polypeptide is Protein translocase subunit SecA (Chlamydia muridarum (strain MoPn / Nigg)).